A 320-amino-acid polypeptide reads, in one-letter code: Replication factor C small subunit 2 (320 aa).

Position 44–51 (44–51) interacts with ATP; it reads GPPGTGKT.

This sequence belongs to the activator 1 small subunits family. RfcS subfamily. Heteromultimer composed of small subunits (RfcS) and large subunits (RfcL).

Part of the RFC clamp loader complex which loads the PCNA sliding clamp onto DNA. In Pyrobaculum islandicum (strain DSM 4184 / JCM 9189 / GEO3), this protein is Replication factor C small subunit 2.